The chain runs to 140 residues: Sex-regulated protein janus-B (140 aa).

Residue R42 participates in substrate binding. Residue H69 is the Proton acceptor of the active site. Residue 110–112 (SRT) participates in substrate binding.

Belongs to the janus family.

In terms of biological role, janA and janB regulate somatic sex differentiation. The polypeptide is Sex-regulated protein janus-B (janB) (Drosophila sechellia (Fruit fly)).